The chain runs to 432 residues: Glutamate-1-semialdehyde 2,1-aminomutase 1 (432 aa).

Position 272 is an N6-(pyridoxal phosphate)lysine (Lys272).

This sequence belongs to the class-III pyridoxal-phosphate-dependent aminotransferase family. HemL subfamily. In terms of assembly, homodimer. Pyridoxal 5'-phosphate is required as a cofactor.

The protein localises to the cytoplasm. The catalysed reaction is (S)-4-amino-5-oxopentanoate = 5-aminolevulinate. Its pathway is porphyrin-containing compound metabolism; protoporphyrin-IX biosynthesis; 5-aminolevulinate from L-glutamyl-tRNA(Glu): step 2/2. The chain is Glutamate-1-semialdehyde 2,1-aminomutase 1 from Exiguobacterium sibiricum (strain DSM 17290 / CCUG 55495 / CIP 109462 / JCM 13490 / 255-15).